Consider the following 307-residue polypeptide: GTPase Era (307 aa).

In terms of domain architecture, Era-type G spans 13–180 (RCGFVALIGA…RRALAEMVPP (168 aa)). The segment at 21–28 (GAPNVGKS) is G1. 21–28 (GAPNVGKS) contributes to the GTP binding site. A G2 region spans residues 47-51 (QTTRA). Residues 68 to 71 (DTPG) are G3. GTP contacts are provided by residues 68–72 (DTPGI) and 130–133 (NKVD). The G4 stretch occupies residues 130–133 (NKVD). The interval 159-161 (ISA) is G5. The 78-residue stretch at 211 to 288 (LHQELPYQST…HLFLFVKVRE (78 aa)) folds into the KH type-2 domain.

Belongs to the TRAFAC class TrmE-Era-EngA-EngB-Septin-like GTPase superfamily. Era GTPase family. As to quaternary structure, monomer.

It localises to the cytoplasm. Its subcellular location is the cell inner membrane. In terms of biological role, an essential GTPase that binds both GDP and GTP, with rapid nucleotide exchange. Plays a role in 16S rRNA processing and 30S ribosomal subunit biogenesis and possibly also in cell cycle regulation and energy metabolism. This Bradyrhizobium sp. (strain ORS 278) protein is GTPase Era.